A 244-amino-acid polypeptide reads, in one-letter code: MFRIISKATLFQDSQRFHTSILSPRCAFHNGGILHKKAKDKDVKHDHDPEFANSFNKMLKSFEAKMQLVHEKLAKRFQEAVVLPSQGNFTQLEALFIPSKSIKAPTPSRLLREIAAVSQKGSQQIIIRPFEDVDIKNILKAIEDSRYPFVANKLNASTIEVKPQRTTLESRQQLAKVLEGYAKDSREQLSAMRTELKKEIAKNKKSKAWTSDDCYKAEAEMQTAFKNAINLLDSGLKSALKKVI.

It belongs to the RRF family.

The protein resides in the mitochondrion. Necessary for protein synthesis in mitochondria. Functions as a ribosome recycling factor in mitochondria. The chain is Putative ribosomal recycling factor, mitochondrial (rrf1) from Schizosaccharomyces pombe (strain 972 / ATCC 24843) (Fission yeast).